A 152-amino-acid chain; its full sequence is Cell division protein SepF (152 aa).

Belongs to the SepF family. Homodimer. Interacts with FtsZ.

Its subcellular location is the cytoplasm. Functionally, cell division protein that is part of the divisome complex and is recruited early to the Z-ring. Probably stimulates Z-ring formation, perhaps through the cross-linking of FtsZ protofilaments. Its function overlaps with FtsA. The sequence is that of Cell division protein SepF from Clostridioides difficile (strain 630) (Peptoclostridium difficile).